The chain runs to 144 residues: Protein SprT-like (144 aa).

The region spanning 4-143 (NKYVQEVSLQ…GKCRGKLTLK (140 aa)) is the SprT-like domain. H64 is a Zn(2+) binding site. The active site involves E65. H68 serves as a coordination point for Zn(2+).

The protein belongs to the SprT family. Requires Zn(2+) as cofactor.

It is found in the cytoplasm. The polypeptide is Protein SprT-like (Streptococcus suis (strain 98HAH33)).